Consider the following 403-residue polypeptide: Heptahelical transmembrane protein ADIPOR3 (403 aa).

At methionine 1 to threonine 73 the chain is on the cytoplasmic side. The helical transmembrane segment at leucine 74–alanine 94 threads the bilayer. The Extracellular portion of the chain corresponds to threonine 95–proline 209. Residues phenylalanine 210 to leucine 230 form a helical membrane-spanning segment. Topologically, residues serine 231–tyrosine 246 are cytoplasmic. A helical membrane pass occupies residues alanine 247–cysteine 267. At tyrosine 268–leucine 274 the chain is on the extracellular side. The chain crosses the membrane as a helical span at residues tyrosine 275–phenylalanine 295. Over glutamine 296–cysteine 306 the chain is Cytoplasmic. A helical transmembrane segment spans residues leucine 307 to tryptophan 327. Topologically, residues histidine 328–glutamate 331 are extracellular. A helical transmembrane segment spans residues alanine 332 to valine 352. Over tyrosine 353 to glutamine 374 the chain is Cytoplasmic. The helical transmembrane segment at leucine 375–leucine 395 threads the bilayer. Topologically, residues lysine 396–cysteine 403 are extracellular.

It belongs to the ADIPOR family.

It localises to the membrane. In terms of biological role, may play a role in abiotic stress response. The polypeptide is Heptahelical transmembrane protein ADIPOR3 (ADIPOR3) (Oryza sativa subsp. japonica (Rice)).